A 28-amino-acid chain; its full sequence is Cyclotide vodo I1 (28 aa).

3 disulfides stabilise this stretch: cysteine 4–cysteine 18, cysteine 8–cysteine 20, and cysteine 13–cysteine 25.

Post-translationally, this is a cyclic peptide. In terms of processing, contains 3 disulfide bonds.

Its function is as follows. Probably participates in a plant defense mechanism. This chain is Cyclotide vodo I1, found in Viola odorata (Sweet violet).